The primary structure comprises 479 residues: NADH-quinone oxidoreductase subunit N 2 (479 aa).

A run of 14 helical transmembrane segments spans residues 4-24 (FVSFLPELVLLAGALALFVVT), 43-63 (GVLVAALATVNHSAVLFSGAY), 67-87 (AFSQLLKIAIAFGYLCVGILS), 99-119 (PEYFLFLALSMTGLLALVSSI), 121-141 (VITLIIALELSSFPLYLMVAM), 159-179 (IMFGIAANGVMFFGFGYLYGL), 201-221 (AVTGLALTLAGFLYKLAVFPF), 239-259 (LIASLPKLGAVAVLVRFVSLA), 267-287 (ATLLTCLAIASMVYGNLIALV), 294-314 (LLGFSGIAHAGYVMVGFVAMD), 318-338 (FASALYYIAGYMLMVLACFVV), 364-384 (LAVTLIVGVFALAGVPPFVGF), 401-421 (ALVVLTVINSAIAIYYYLQIV), and 444-464 (ALCVLLIVAITLLGVAPAFTI).

This sequence belongs to the complex I subunit 2 family. In terms of assembly, NDH-1 is composed of 14 different subunits. Subunits NuoA, H, J, K, L, M, N constitute the membrane sector of the complex.

Its subcellular location is the cell inner membrane. It carries out the reaction a quinone + NADH + 5 H(+)(in) = a quinol + NAD(+) + 4 H(+)(out). In terms of biological role, NDH-1 shuttles electrons from NADH, via FMN and iron-sulfur (Fe-S) centers, to quinones in the respiratory chain. The immediate electron acceptor for the enzyme in this species is believed to be ubiquinone. Couples the redox reaction to proton translocation (for every two electrons transferred, four hydrogen ions are translocated across the cytoplasmic membrane), and thus conserves the redox energy in a proton gradient. The protein is NADH-quinone oxidoreductase subunit N 2 of Opitutus terrae (strain DSM 11246 / JCM 15787 / PB90-1).